The primary structure comprises 423 residues: Aspartic protease-like protein pytH (423 aa).

A signal peptide spans Met-1–Ala-16. One can recognise a Peptidase A1 domain in the interval Thr-38–Ala-416. Residue Asp-56 is part of the active site. N-linked (GlcNAc...) asparagine glycosylation is found at Asn-88, Asn-97, Asn-168, Asn-196, Asn-231, and Asn-279. Asp-291 is an active-site residue. Asn-330 carries N-linked (GlcNAc...) asparagine glycosylation. The cysteines at positions 338 and 377 are disulfide-linked.

The protein belongs to the peptidase A1 family.

It participates in secondary metabolite biosynthesis. Its function is as follows. Aspartic protease-like protein; part of the gene cluster that mediates the biosynthesis of pyranterreones, a family of antioxidative compounds. The first step of pyranonigrins biosynthesis is performed by the hybrid PKS-NRPS synthetase pytA that condenses 4 malonyl-CoA units ato the acetyl starter unit by the modular PKS of pytA. The acyl chain is then connected to an L-serine through the amide bond by the modular NRPS of pytA. A tetramic acid is formed and released from the PKS-NRPS pytA to give pyranterreone 5 with the help of the thioesterase pytI. Pyranterreone 5 could be methylated by pytC to afford pyranterreone 6. Both pyranterreones 5 and 6 are subsequently oxidized by the FAD-linked oxidoreductase pytB and the cytochrome P450 monooxygenase pytD to form the fused gamma-pyrone core, resulting in pyranterreones 7 and 11, respectively. The hydroxy group at C-8 of pyranterreones 7 and 11 are dehydrated by the aspartyl protease pytH to form a delta-7 double bond to give pyranterreones 3 and 1, 2 accordingly. The exo-methylene of pyranterreone 3 could be reduced into a pendant methyl by reductase pytE to provide pyranterreone 4, also known as cordylactam. Pyranterreone 4 can be reconverted to pyranterreone 3 through pytB-catalyzed dehydrogenation or further oxidized to pyranterreones 9 and 10. The sequence is that of Aspartic protease-like protein pytH from Aspergillus terreus (strain NIH 2624 / FGSC A1156).